We begin with the raw amino-acid sequence, 457 residues long: tRNA modification GTPase MnmE (457 aa).

Arginine 25, glutamate 87, and arginine 126 together coordinate (6S)-5-formyl-5,6,7,8-tetrahydrofolate. The 155-residue stretch at glycine 223–phenylalanine 377 folds into the TrmE-type G domain. Asparagine 233 is a binding site for K(+). Residues asparagine 233 to serine 238, threonine 252 to threonine 258, and aspartate 277 to glycine 280 contribute to the GTP site. Serine 237 contributes to the Mg(2+) binding site. Positions 252, 254, and 257 each coordinate K(+). Mg(2+) is bound at residue threonine 258. Position 457 (lysine 457) interacts with (6S)-5-formyl-5,6,7,8-tetrahydrofolate.

Belongs to the TRAFAC class TrmE-Era-EngA-EngB-Septin-like GTPase superfamily. TrmE GTPase family. As to quaternary structure, homodimer. Heterotetramer of two MnmE and two MnmG subunits. Requires K(+) as cofactor.

The protein localises to the cytoplasm. Functionally, exhibits a very high intrinsic GTPase hydrolysis rate. Involved in the addition of a carboxymethylaminomethyl (cmnm) group at the wobble position (U34) of certain tRNAs, forming tRNA-cmnm(5)s(2)U34. In Streptococcus sanguinis (strain SK36), this protein is tRNA modification GTPase MnmE.